Consider the following 694-residue polypeptide: Elongation factor G (694 aa).

A tr-type G domain is found at 6 to 288 (KLYRNIGIAA…GVIEYLPSPT (283 aa)). GTP-binding positions include 15–22 (AHVDAGKT), 86–90 (DTPGH), and 140–143 (NKMD).

This sequence belongs to the TRAFAC class translation factor GTPase superfamily. Classic translation factor GTPase family. EF-G/EF-2 subfamily.

It localises to the cytoplasm. Functionally, catalyzes the GTP-dependent ribosomal translocation step during translation elongation. During this step, the ribosome changes from the pre-translocational (PRE) to the post-translocational (POST) state as the newly formed A-site-bound peptidyl-tRNA and P-site-bound deacylated tRNA move to the P and E sites, respectively. Catalyzes the coordinated movement of the two tRNA molecules, the mRNA and conformational changes in the ribosome. In Legionella pneumophila (strain Lens), this protein is Elongation factor G.